We begin with the raw amino-acid sequence, 259 residues long: Ribosomal RNA small subunit methyltransferase A (259 aa).

S-adenosyl-L-methionine contacts are provided by N13, L15, G39, E60, D84, and N101.

It belongs to the class I-like SAM-binding methyltransferase superfamily. rRNA adenine N(6)-methyltransferase family. RsmA subfamily.

The protein resides in the cytoplasm. It catalyses the reaction adenosine(1518)/adenosine(1519) in 16S rRNA + 4 S-adenosyl-L-methionine = N(6)-dimethyladenosine(1518)/N(6)-dimethyladenosine(1519) in 16S rRNA + 4 S-adenosyl-L-homocysteine + 4 H(+). Specifically dimethylates two adjacent adenosines (A1518 and A1519) in the loop of a conserved hairpin near the 3'-end of 16S rRNA in the 30S particle. May play a critical role in biogenesis of 30S subunits. This chain is Ribosomal RNA small subunit methyltransferase A, found in Mesomycoplasma hyopneumoniae (strain 232) (Mycoplasma hyopneumoniae).